Here is a 384-residue protein sequence, read N- to C-terminus: 8-amino-7-oxononanoate synthase (384 aa).

R21 contributes to the substrate binding site. A pyridoxal 5'-phosphate-binding site is contributed by 108–109; the sequence is GF. H133 is a binding site for substrate. S179, H207, and T233 together coordinate pyridoxal 5'-phosphate. The residue at position 236 (K236) is an N6-(pyridoxal phosphate)lysine. Residue T352 coordinates substrate.

This sequence belongs to the class-II pyridoxal-phosphate-dependent aminotransferase family. BioF subfamily. Homodimer. It depends on pyridoxal 5'-phosphate as a cofactor.

The catalysed reaction is 6-carboxyhexanoyl-[ACP] + L-alanine + H(+) = (8S)-8-amino-7-oxononanoate + holo-[ACP] + CO2. It participates in cofactor biosynthesis; biotin biosynthesis. Catalyzes the decarboxylative condensation of pimeloyl-[acyl-carrier protein] and L-alanine to produce 8-amino-7-oxononanoate (AON), [acyl-carrier protein], and carbon dioxide. The polypeptide is 8-amino-7-oxononanoate synthase (Escherichia coli O7:K1 (strain IAI39 / ExPEC)).